Here is a 307-residue protein sequence, read N- to C-terminus: Ribonuclease Z (307 aa).

Residues H61, H63, D65, H66, H138, D208, and H264 each coordinate Zn(2+). D65 serves as the catalytic Proton acceptor.

This sequence belongs to the RNase Z family. In terms of assembly, homodimer. Requires Zn(2+) as cofactor.

It catalyses the reaction Endonucleolytic cleavage of RNA, removing extra 3' nucleotides from tRNA precursor, generating 3' termini of tRNAs. A 3'-hydroxy group is left at the tRNA terminus and a 5'-phosphoryl group is left at the trailer molecule.. Its function is as follows. Zinc phosphodiesterase, which displays some tRNA 3'-processing endonuclease activity. Probably involved in tRNA maturation, by removing a 3'-trailer from precursor tRNA. Also shows activity toward a broad range of substrates, such as intron containing pre-tRNAs, 5' extended precursors and non-RNA substrates. The sequence is that of Ribonuclease Z from Pyrococcus furiosus (strain ATCC 43587 / DSM 3638 / JCM 8422 / Vc1).